The following is a 210-amino-acid chain: Fimbriae Z protein (210 aa).

A Response regulatory domain is found at 5-121 (SVIIMDTHPI…DIFHAVQMIL (117 aa)). Aspartate 56 carries the post-translational modification 4-aspartylphosphate. One can recognise an HTH luxR-type domain in the interval 143 to 208 (NSSTVTVLSN…ELIDYAKLYE (66 aa)). A DNA-binding region (H-T-H motif) is located at residues 167–186 (NKEIADKLLLSNKTVSAHKS).

The protein localises to the cytoplasm. This chain is Fimbriae Z protein (fimZ), found in Escherichia coli O157:H7.